The following is a 296-amino-acid chain: Thymidylate synthase (296 aa).

Residues Arg23 and 157–158 (RR) each bind dUMP. Cys177 acts as the Nucleophile in catalysis. DUMP-binding positions include 198 to 201 (RSAD), Asn209, and 239 to 241 (HIY). Asp201 serves as a coordination point for (6R)-5,10-methylene-5,6,7,8-tetrahydrofolate. Ala295 contacts (6R)-5,10-methylene-5,6,7,8-tetrahydrofolate.

This sequence belongs to the thymidylate synthase family. Bacterial-type ThyA subfamily. Homodimer.

The protein localises to the cytoplasm. It carries out the reaction dUMP + (6R)-5,10-methylene-5,6,7,8-tetrahydrofolate = 7,8-dihydrofolate + dTMP. It functions in the pathway pyrimidine metabolism; dTTP biosynthesis. Its function is as follows. Catalyzes the reductive methylation of 2'-deoxyuridine-5'-monophosphate (dUMP) to 2'-deoxythymidine-5'-monophosphate (dTMP) while utilizing 5,10-methylenetetrahydrofolate (mTHF) as the methyl donor and reductant in the reaction, yielding dihydrofolate (DHF) as a by-product. This enzymatic reaction provides an intracellular de novo source of dTMP, an essential precursor for DNA biosynthesis. The sequence is that of Thymidylate synthase from Zymomonas mobilis subsp. mobilis (strain ATCC 31821 / ZM4 / CP4).